Consider the following 305-residue polypeptide: Dihydroorotate dehydrogenase B (NAD(+)), catalytic subunit (305 aa).

Residues Ser-23 and 47–48 (KG) contribute to the FMN site. Substrate contacts are provided by residues Lys-47 and 71–75 (NAIGL). FMN-binding residues include Asn-101 and Asn-129. Asn-129 is a substrate binding site. Cys-132 serves as the catalytic Nucleophile. Residues Lys-167 and Ile-193 each coordinate FMN. 194–195 (NT) lines the substrate pocket. FMN contacts are provided by residues Gly-219, 245-246 (GG), and 267-268 (GT).

Belongs to the dihydroorotate dehydrogenase family. Type 1 subfamily. As to quaternary structure, heterotetramer of 2 PyrK and 2 PyrD type B subunits. The cofactor is FMN.

The protein resides in the cytoplasm. The enzyme catalyses (S)-dihydroorotate + NAD(+) = orotate + NADH + H(+). It functions in the pathway pyrimidine metabolism; UMP biosynthesis via de novo pathway; orotate from (S)-dihydroorotate (NAD(+) route): step 1/1. In terms of biological role, catalyzes the conversion of dihydroorotate to orotate with NAD(+) as electron acceptor. This Geobacter sp. (strain M21) protein is Dihydroorotate dehydrogenase B (NAD(+)), catalytic subunit (pyrD).